A 223-amino-acid chain; its full sequence is 7-cyano-7-deazaguanine synthase (223 aa).

8–18 (LSGGLDSATTL) lines the ATP pocket. Residues Cys-187, Cys-197, Cys-200, and Cys-203 each coordinate Zn(2+).

Belongs to the QueC family. The cofactor is Zn(2+).

It catalyses the reaction 7-carboxy-7-deazaguanine + NH4(+) + ATP = 7-cyano-7-deazaguanine + ADP + phosphate + H2O + H(+). It participates in purine metabolism; 7-cyano-7-deazaguanine biosynthesis. Functionally, catalyzes the ATP-dependent conversion of 7-carboxy-7-deazaguanine (CDG) to 7-cyano-7-deazaguanine (preQ(0)). The protein is 7-cyano-7-deazaguanine synthase of Methylococcus capsulatus (strain ATCC 33009 / NCIMB 11132 / Bath).